The chain runs to 658 residues: Glycogen debranching enzyme (658 aa).

The active-site Nucleophile is Asp335. Glu370 (proton donor) is an active-site residue. The span at 457–468 (NDANGEGNRDGT) shows a compositional bias: basic and acidic residues. The segment at 457–478 (NDANGEGNRDGTDSNFSNNHGT) is disordered.

It belongs to the glycosyl hydrolase 13 family.

It catalyses the reaction Hydrolysis of (1-&gt;6)-alpha-D-glucosidic linkages to branches with degrees of polymerization of three or four glucose residues in limit dextrin.. The protein operates within glycan degradation; glycogen degradation. Functionally, removes maltotriose and maltotetraose chains that are attached by 1,6-alpha-linkage to the limit dextrin main chain, generating a debranched limit dextrin. This is Glycogen debranching enzyme from Pectobacterium carotovorum subsp. carotovorum (strain PC1).